The chain runs to 539 residues: Chaperonin GroEL 1 (539 aa).

Residues T30–P33, K51, D87–T91, G415, N480–A482, and D496 contribute to the ATP site.

Belongs to the chaperonin (HSP60) family. Forms a cylinder of 14 subunits composed of two heptameric rings stacked back-to-back. Interacts with the co-chaperonin GroES.

It is found in the cytoplasm. The catalysed reaction is ATP + H2O + a folded polypeptide = ADP + phosphate + an unfolded polypeptide.. Its function is as follows. Together with its co-chaperonin GroES, plays an essential role in assisting protein folding. The GroEL-GroES system forms a nano-cage that allows encapsulation of the non-native substrate proteins and provides a physical environment optimized to promote and accelerate protein folding. The chain is Chaperonin GroEL 1 from Bradyrhizobium sp. (strain ORS 278).